A 118-amino-acid polypeptide reads, in one-letter code: Large ribosomal subunit protein bL20 (118 aa).

This sequence belongs to the bacterial ribosomal protein bL20 family.

Binds directly to 23S ribosomal RNA and is necessary for the in vitro assembly process of the 50S ribosomal subunit. It is not involved in the protein synthesizing functions of that subunit. The chain is Large ribosomal subunit protein bL20 from Sulfurimonas denitrificans (strain ATCC 33889 / DSM 1251) (Thiomicrospira denitrificans (strain ATCC 33889 / DSM 1251)).